The primary structure comprises 504 residues: Doublesex- and mab-3-related transcription factor A1 (504 aa).

Basic and acidic residues predominate over residues 1-13 (MERSQCGSRDRGV). Residues 1 to 27 (MERSQCGSRDRGVSGRPHLAPGLVVAA) form a disordered region. The segment at residues 97–144 (CARCRNHGVVSALKGHKRFCRWRDCACAKCTLIAERQRVMAAQVALRR) is a DNA-binding region (DM). Disordered regions lie at residues 170 to 192 (GRAS…AAGA) and 266 to 307 (SISE…NESE). The span at 293-306 (RSLSSSDLESGNES) shows a compositional bias: low complexity. A DMA domain is found at 327–362 (RDPLDILTKIFPNYRRSRLEGILRFCKGDVVQAIEQ).

This sequence belongs to the DMRT family. Expressed in liver, kidney, pancreas, prostate and weakly detected in testis and ovary.

It localises to the nucleus. The sequence is that of Doublesex- and mab-3-related transcription factor A1 (DMRTA1) from Homo sapiens (Human).